We begin with the raw amino-acid sequence, 968 residues long: RNA polymerase-associated protein RapA (968 aa).

The Helicase ATP-binding domain maps to 163-332; it reads EVGRRYAPRV…FARLRLLDPD (170 aa). 176–183 contributes to the ATP binding site; sequence DEVGLGKT. A DEAH box motif is present at residues 278-281; that stretch reads DEAH. The Helicase C-terminal domain maps to 491–655; the sequence is RVDWLIEFLK…EFAEELLNVL (165 aa).

This sequence belongs to the SNF2/RAD54 helicase family. RapA subfamily. As to quaternary structure, interacts with the RNAP. Has a higher affinity for the core RNAP than for the holoenzyme. Its ATPase activity is stimulated by binding to RNAP.

Its function is as follows. Transcription regulator that activates transcription by stimulating RNA polymerase (RNAP) recycling in case of stress conditions such as supercoiled DNA or high salt concentrations. Probably acts by releasing the RNAP, when it is trapped or immobilized on tightly supercoiled DNA. Does not activate transcription on linear DNA. Probably not involved in DNA repair. The chain is RNA polymerase-associated protein RapA from Shewanella oneidensis (strain ATCC 700550 / JCM 31522 / CIP 106686 / LMG 19005 / NCIMB 14063 / MR-1).